A 477-amino-acid chain; its full sequence is Glycogen synthase (477 aa).

Residue K15 participates in ADP-alpha-D-glucose binding.

This sequence belongs to the glycosyltransferase 1 family. Bacterial/plant glycogen synthase subfamily.

The enzyme catalyses [(1-&gt;4)-alpha-D-glucosyl](n) + ADP-alpha-D-glucose = [(1-&gt;4)-alpha-D-glucosyl](n+1) + ADP + H(+). The protein operates within glycan biosynthesis; glycogen biosynthesis. In terms of biological role, synthesizes alpha-1,4-glucan chains using ADP-glucose. The chain is Glycogen synthase from Shigella sonnei (strain Ss046).